We begin with the raw amino-acid sequence, 60 residues long: Light-harvesting protein B-800/850 alpha chain (60 aa).

The Cytoplasmic segment spans residues 1–14 (MNNAKIWTVVKPST). The helical transmembrane segment at 15-35 (GIPLILGAVAVAALIVHAGLL) threads the bilayer. An a bacteriochlorophyll-binding site is contributed by histidine 31. The Periplasmic portion of the chain corresponds to 36 to 60 (TNTTWFANYWNGNPMATVVAVAPAQ).

It belongs to the antenna complex alpha subunit family. In terms of assembly, the core complex is formed by different alpha and beta chains, binding bacteriochlorophyll molecules, and arranged most probably in tetrameric structures disposed around the reaction center. The non-pigmented gamma chains may constitute additional components.

Its subcellular location is the cell inner membrane. Its function is as follows. Antenna complexes are light-harvesting systems, which transfer the excitation energy to the reaction centers. This Rhodobacter capsulatus (Rhodopseudomonas capsulata) protein is Light-harvesting protein B-800/850 alpha chain (pucA).